The following is a 98-amino-acid chain: Integration host factor subunit alpha (98 aa).

A disordered region spans residues 52–73 (FDLREKNQRPGRNPKTGEDIPI).

The protein belongs to the bacterial histone-like protein family. Heterodimer of an alpha and a beta chain.

This protein is one of the two subunits of integration host factor, a specific DNA-binding protein that functions in genetic recombination as well as in transcriptional and translational control. The polypeptide is Integration host factor subunit alpha (Aeromonas hydrophila subsp. hydrophila (strain ATCC 7966 / DSM 30187 / BCRC 13018 / CCUG 14551 / JCM 1027 / KCTC 2358 / NCIMB 9240 / NCTC 8049)).